Reading from the N-terminus, the 345-residue chain is Cell division control protein 2 homolog 2 (345 aa).

Residues 1 to 44 (MQVQVQEGQTACDGSLRPLPSAGPASFVPRSLRPAPLRGTSTPD) are disordered. In terms of domain architecture, Protein kinase spans 46–328 (YSRIEKVGEG…AYEALQHSYF (283 aa)). Residues 52–60 (VGEGSYGIV) and Lys75 each bind ATP. A Phosphoserine modification is found at Ser56. Residue Tyr57 is modified to Phosphotyrosine. Asp168 acts as the Proton acceptor in catalysis.

Belongs to the protein kinase superfamily. CMGC Ser/Thr protein kinase family. CDC2/CDKX subfamily. As to quaternary structure, forms a stable but non-covalent complex with a regulatory subunit and with a cyclin.

The catalysed reaction is L-seryl-[protein] + ATP = O-phospho-L-seryl-[protein] + ADP + H(+). The enzyme catalyses L-threonyl-[protein] + ATP = O-phospho-L-threonyl-[protein] + ADP + H(+). With respect to regulation, phosphorylation at Ser-56 or Tyr-57 inactivates the enzyme. Its function is as follows. Probably involved in the control of the cell cycle. The protein is Cell division control protein 2 homolog 2 (CRK2) of Trypanosoma brucei brucei.